The chain runs to 144 residues: Glycophorin-A (144 aa).

A compositionally biased stretch (polar residues) spans 1 to 25 (SSTTVPATHTSSSSLGPEQYVSSQS). A disordered region spans residues 1 to 55 (SSTTVPATHTSSSSLGPEQYVSSQSNDKHTSDSHPTPTSAHEVTTEFSGRTHYPP). An O-linked (GalNAc...) serine glycan is attached at serine 2. O-linked (GalNAc...) threonine glycans are attached at residues threonine 3, threonine 4, threonine 8, and threonine 10. O-linked (GalNAc...) serine glycans are attached at residues serine 11, serine 12, serine 13, serine 14, serine 22, and serine 23. Residues threonine 30, threonine 36, threonine 38, threonine 44, and threonine 45 are each glycosylated (O-linked (GalNAc...) threonine). Polar residues predominate over residues 33–48 (SHPTPTSAHEVTTEFS). Serine 48 carries an O-linked (GalNAc...) serine glycan. Threonine 51 carries an O-linked (GalNAc...) threonine glycan. Residues 70 to 92 (LVIALIIFGVMAGVIGTILFISY) traverse the membrane as a helical segment. Positions 101 to 144 (SESDVQPLPPPDAEVPLSSVEIEDPEETDELNSFTKPNQERNES) are disordered. Serine 118 carries the post-translational modification Phosphoserine. Over residues 121 to 130 (EIEDPEETDE) the composition is skewed to acidic residues.

Belongs to the glycophorin-A family. As to quaternary structure, homodimer. Component of the ankyrin-1 complex in the erythrocyte, composed of ANK1, RHCE, RHAG, SLC4A1, EPB42, GYPA, GYPB and AQP1. Interacts with SLC4A1; a GYPA monomer is bound at each end of the SLC4A1 dimer forming a heterotetramer.

The protein localises to the membrane. In terms of biological role, component of the ankyrin-1 complex, a multiprotein complex involved in the stability and shape of the erythrocyte membrane. Glycophorin A is the major intrinsic membrane protein of the erythrocyte. The N-terminal glycosylated segment, which lies outside the erythrocyte membrane, has MN blood group receptors. Appears to be important for the function of SLC4A1 and is required for high activity of SLC4A1. May be involved in translocation of SLC4A1 to the plasma membrane. This Macaca fuscata fuscata (Japanese macaque) protein is Glycophorin-A.